The primary structure comprises 275 residues: Glutamate racemase (275 aa).

Residues 22–23 (DS) and 54–55 (YG) each bind substrate. Cysteine 85 (proton donor/acceptor) is an active-site residue. 86-87 (NT) contributes to the substrate binding site. The active-site Proton donor/acceptor is cysteine 196. 197-198 (TH) is a substrate binding site.

It belongs to the aspartate/glutamate racemases family.

The enzyme catalyses L-glutamate = D-glutamate. Its pathway is cell wall biogenesis; peptidoglycan biosynthesis. Provides the (R)-glutamate required for cell wall biosynthesis. In Pseudomonas syringae pv. tomato (strain ATCC BAA-871 / DC3000), this protein is Glutamate racemase.